Consider the following 82-residue polypeptide: Photosystem I iron-sulfur center (82 aa).

2 4Fe-4S ferredoxin-type domains span residues 2–31 (AHSV…MVPW) and 40–69 (IAAA…IRVY). The [4Fe-4S] cluster site is built by cysteine 11, cysteine 14, cysteine 17, cysteine 21, cysteine 49, cysteine 52, cysteine 55, and cysteine 59.

As to quaternary structure, the cyanobacterial PSI reaction center is composed of one copy each of PsaA,B,C,D,E,F,I,J,K,L,M and X, and forms trimeric complexes. [4Fe-4S] cluster is required as a cofactor.

It localises to the cellular thylakoid membrane. The catalysed reaction is reduced [plastocyanin] + hnu + oxidized [2Fe-2S]-[ferredoxin] = oxidized [plastocyanin] + reduced [2Fe-2S]-[ferredoxin]. Apoprotein for the two 4Fe-4S centers FA and FB of photosystem I (PSI); essential for photochemical activity. FB is the terminal electron acceptor of PSI, donating electrons to ferredoxin. The C-terminus interacts with PsaA/B/D and helps assemble the protein into the PSI complex. Required for binding of PsaD and PsaE to PSI. PSI is a plastocyanin/cytochrome c6-ferredoxin oxidoreductase, converting photonic excitation into a charge separation, which transfers an electron from the donor P700 chlorophyll pair to the spectroscopically characterized acceptors A0, A1, FX, FA and FB in turn. This chain is Photosystem I iron-sulfur center, found in Synechococcus sp. (strain JA-2-3B'a(2-13)) (Cyanobacteria bacterium Yellowstone B-Prime).